The primary structure comprises 593 residues: Melanopsin-A (593 aa).

Topologically, residues 1–77 are extracellular; that stretch reads MMSGAAHSVR…VDVPDHAHYT (77 aa). Residues 78–98 form a helical membrane-spanning segment; sequence IGAVILTVGITGMLGNFLVIY. Residues 99 to 112 lie on the Cytoplasmic side of the membrane; it reads AFSRSRTLRTPANL. The chain crosses the membrane as a helical span at residues 113–133; that stretch reads FIINLAITDFLMCATQAPIFF. Residues 134 to 150 are Extracellular-facing; sequence TTSMHKRWIFGEKGCEL. Cys148 and Cys226 are joined by a disulfide. Residues 151–171 form a helical membrane-spanning segment; it reads YAFCGALFGICSMITLMVIAV. The Cytoplasmic portion of the chain corresponds to 172–191; sequence DRYFVITRPLASIGVLSQKR. Residues 192 to 212 traverse the membrane as a helical segment; sequence ALLILLVAWVYSLGWSLPPFF. Over 213 to 243 the chain is Extracellular; that stretch reads GWSAYVPEGLLTSCTWDYMTFTPSVRAYTML. The helical transmembrane segment at 244–264 threads the bilayer; it reads LFIFVFFIPLIVIIYCYFFIF. Over 265–300 the chain is Cytoplasmic; sequence RSIRTTNEAVGKINGDNKRDSMKRFQRLKNEWKMAK. A helical transmembrane segment spans residues 301–321; sequence IALIVILMYVISWSPYSTVAL. Residues 322 to 336 are Extracellular-facing; that stretch reads TAFAGYSDFLTPYMN. Residues 337–357 form a helical membrane-spanning segment; that stretch reads SVPAVIAKASAIHNPIIYAIT. N6-(retinylidene)lysine is present on Lys344. Residues 358-593 lie on the Cytoplasmic side of the membrane; sequence HPKYRLAIAK…HIDNHRPQYL (236 aa). Disordered stretches follow at residues 397–449 and 547–593; these read TVTS…RQVS and RSNV…PQYL. A compositionally biased stretch (polar residues) spans 414 to 449; the sequence is TGKSRLSSASDSESGWTDTEADLSSMSSRPASRQVS. Positions 581–593 are enriched in basic and acidic residues; sequence ESGHIDNHRPQYL.

The protein belongs to the G-protein coupled receptor 1 family. Opsin subfamily.

It is found in the cell membrane. Photoreceptor implicated in non-image-forming responses to light. May be able to isomerize covalently bound all-trans retinal back to 11-cis retinal. This is Melanopsin-A (opn4a) from Danio rerio (Zebrafish).